The chain runs to 306 residues: Aspartate carbamoyltransferase catalytic subunit (306 aa).

Positions 55 and 56 each coordinate carbamoyl phosphate. Residue Lys-84 participates in L-aspartate binding. Carbamoyl phosphate is bound by residues Arg-105, His-133, and Gln-136. Arg-166 and Arg-227 together coordinate L-aspartate. Positions 265 and 266 each coordinate carbamoyl phosphate.

It belongs to the aspartate/ornithine carbamoyltransferase superfamily. ATCase family. As to quaternary structure, heterododecamer (2C3:3R2) of six catalytic PyrB chains organized as two trimers (C3), and six regulatory PyrI chains organized as three dimers (R2).

The enzyme catalyses carbamoyl phosphate + L-aspartate = N-carbamoyl-L-aspartate + phosphate + H(+). The protein operates within pyrimidine metabolism; UMP biosynthesis via de novo pathway; (S)-dihydroorotate from bicarbonate: step 2/3. Catalyzes the condensation of carbamoyl phosphate and aspartate to form carbamoyl aspartate and inorganic phosphate, the committed step in the de novo pyrimidine nucleotide biosynthesis pathway. This Neisseria meningitidis serogroup A / serotype 4A (strain DSM 15465 / Z2491) protein is Aspartate carbamoyltransferase catalytic subunit.